Consider the following 185-residue polypeptide: Peptidyl-tRNA hydrolase (185 aa).

TRNA is bound at residue phenylalanine 14. Histidine 19 (proton acceptor) is an active-site residue. TRNA is bound by residues tyrosine 64, asparagine 66, and asparagine 112.

The protein belongs to the PTH family. As to quaternary structure, monomer.

Its subcellular location is the cytoplasm. It catalyses the reaction an N-acyl-L-alpha-aminoacyl-tRNA + H2O = an N-acyl-L-amino acid + a tRNA + H(+). Hydrolyzes ribosome-free peptidyl-tRNAs (with 1 or more amino acids incorporated), which drop off the ribosome during protein synthesis, or as a result of ribosome stalling. Its function is as follows. Catalyzes the release of premature peptidyl moieties from peptidyl-tRNA molecules trapped in stalled 50S ribosomal subunits, and thus maintains levels of free tRNAs and 50S ribosomes. This Exiguobacterium sp. (strain ATCC BAA-1283 / AT1b) protein is Peptidyl-tRNA hydrolase.